The chain runs to 597 residues: MFS-type transporter FPY5 (597 aa).

Residues 1–55 (MSETTGLPLKHLQGSPPGTPVNTNNESNEASPDDGCRLPDTVTEAEASSDNHGSV) are disordered. Composition is skewed to polar residues over residues 20 to 30 (PVNTNNESNEA) and 46 to 55 (EASSDNHGSV). Residue Asn-25 is glycosylated (N-linked (GlcNAc...) asparagine). An N-linked (GlcNAc...) asparagine glycan is attached at Asn-72. A run of 9 helical transmembrane segments spans residues 94 to 114 (LSLLLSTLETTIVSTALVSIV), 120 to 140 (FNMAGWIVTSYLVTYTGFLII), 147 to 167 (IFGCKLMLLLAITIFTVFSMA), 183 to 203 (FQGMGGSGIYSLSTIMVPLMV), 214 to 234 (IMSSTFILSSVLGPILGGAIT), 241 to 261 (WVFYFNGPGGALAAVLLAFSV), 286 to 306 (VDFVGMTVSLAASILIIFALE), 316 to 336 (SGAIVSTFVLSGVLWIAFIAW), and 360 to 380 (FVMGLLLNGFFTGFPFMAALI). N-linked (GlcNAc...) asparagine glycosylation is present at Asn-390. Transmembrane regions (helical) follow at residues 402–422 (LPLLLLSPLATAINGILVSKL), 424–444 (VPPLYTLFLGGSLQTIGVGLY), 463–483 (IMGLGFGFNLSTILMMVPLVV), 498–518 (IRVLGGTIGLAVCSALLINHI), and 562–582 (EQMRVMLYFSIASILSLVLLV).

This sequence belongs to the major facilitator superfamily. TCR/Tet family.

It localises to the membrane. It participates in secondary metabolite biosynthesis. Functionally, MFS-type transporter; part of the gene cluster that mediates the biosynthesis of the gamma-pyrones fusapyrone (FPY) and deoxyfusapyrone (dFPY). The chain is MFS-type transporter FPY5 from Fusarium mangiferae (Mango malformation disease fungus).